A 645-amino-acid polypeptide reads, in one-letter code: Matrix metalloproteinase-24 (645 aa).

A compositionally biased stretch (low complexity) spans 1–10; it reads MPRSRGGRAA. The segment at 1-26 is disordered; sequence MPRSRGGRAAPGPPPPPPPPGQAPRW. Positions 1-52 are cleaved as a signal peptide; sequence MPRSRGGRAAPGPPPPPPPPGQAPRWSRWRVPGRLLLLLLPALCCLPGAARA. Over residues 11–22 the composition is skewed to pro residues; sequence PGPPPPPPPPGQ. A propeptide spanning residues 53–155 is cleaved from the precursor; sequence AAAAAGAGNR…HLSRRRRNKR (103 aa). Residues 53-602 lie on the Extracellular side of the membrane; that stretch reads AAAAAGAGNR…INDVPGSVNA (550 aa). A Cysteine switch motif is present at residues 137 to 144; sequence PRCGVPDH. 2 residues coordinate Zn(2+): Cys139 and His282. The active site involves Glu283. Zn(2+) is bound by residues His286 and His292. The segment at 323–380 is disordered; the sequence is QKIYGPPAEPLEPTRPLPTLPVRRIHSPSERKHERQPRPPRPPLGDRPSTPGTKPNIC. Residues 329 to 341 show a composition bias toward pro residues; it reads PAEPLEPTRPLPT. A compositionally biased stretch (basic and acidic residues) spans 349-359; that stretch reads SPSERKHERQP. Hemopexin repeat units follow at residues 377–425, 426–471, 473–521, and 522–569; these read PNIC…WKGL, PARI…GSCL, REGI…KGIP, and QAPQ…WMGC. Cys380 and Cys569 are joined by a disulfide. The chain crosses the membrane as a helical span at residues 603 to 623; it reads VAVVIPCILSLCILVLVYTIF. The Cytoplasmic portion of the chain corresponds to 624-645; sequence QFKNKTGPQPVTYYKRPVQEWV. The PDZ-binding motif lies at 643 to 645; the sequence is EWV.

Belongs to the peptidase M10A family. As to quaternary structure, interacts (via PDZ-binding motif) with APBA3 (via PDZ domain). Interacts with GRIP1 and GRIP2. Requires Zn(2+) as cofactor. The cofactor is Ca(2+). In terms of processing, cleaved by a furin endopeptidase in the trans-Golgi network. In terms of tissue distribution, predominantly expressed in brain, kidney, pancreas and lung. Overexpressed in a series of brain tumors, including astrocytomas and glioblastomas.

The protein resides in the cell membrane. Its subcellular location is the golgi apparatus. The protein localises to the trans-Golgi network membrane. It is found in the secreted. It localises to the extracellular space. The protein resides in the extracellular matrix. Its function is as follows. Metalloprotease that mediates cleavage of N-cadherin (CDH2) and acts as a regulator of neuro-immune interactions and neural stem cell quiescence. Involved in cell-cell interactions between nociceptive neurites and mast cells, possibly by mediating cleavage of CDH2, thereby acting as a mediator of peripheral thermal nociception and inflammatory hyperalgesia. Key regulator of neural stem cells quiescence by mediating cleavage of CDH2, affecting CDH2-mediated anchorage of neural stem cells to ependymocytes in the adult subependymal zone, leading to modulate their quiescence. May play a role in axonal growth. Able to activate progelatinase A. May also be a proteoglycanase involved in degradation of proteoglycans, such as dermatan sulfate and chondroitin sulfate proteoglycans. Cleaves partially fibronectin, but not collagen type I, nor laminin. In Homo sapiens (Human), this protein is Matrix metalloproteinase-24 (MMP24).